The chain runs to 273 residues: 3-methyl-2-oxobutanoate hydroxymethyltransferase (273 aa).

2 residues coordinate Mg(2+): Asp-53 and Asp-92. Residues 53 to 54 (DS), Asp-92, and Lys-122 each bind 3-methyl-2-oxobutanoate. Position 124 (Glu-124) interacts with Mg(2+). Glu-191 functions as the Proton acceptor in the catalytic mechanism.

The protein belongs to the PanB family. Homodecamer; pentamer of dimers. It depends on Mg(2+) as a cofactor.

It localises to the cytoplasm. The catalysed reaction is 3-methyl-2-oxobutanoate + (6R)-5,10-methylene-5,6,7,8-tetrahydrofolate + H2O = 2-dehydropantoate + (6S)-5,6,7,8-tetrahydrofolate. The protein operates within cofactor biosynthesis; (R)-pantothenate biosynthesis; (R)-pantoate from 3-methyl-2-oxobutanoate: step 1/2. Its function is as follows. Catalyzes the reversible reaction in which hydroxymethyl group from 5,10-methylenetetrahydrofolate is transferred onto alpha-ketoisovalerate to form ketopantoate. The chain is 3-methyl-2-oxobutanoate hydroxymethyltransferase from Bacteroides fragilis (strain ATCC 25285 / DSM 2151 / CCUG 4856 / JCM 11019 / LMG 10263 / NCTC 9343 / Onslow / VPI 2553 / EN-2).